Consider the following 520-residue polypeptide: 2-isopropylmalate synthase (520 aa).

In terms of domain architecture, Pyruvate carboxyltransferase spans 12-274 (VIIFDTTLRD…WNKIDTTQLT (263 aa)). Residues Asp21, His209, His211, and Asn245 each contribute to the Mn(2+) site. Residues 398 to 520 (KLTSLTVIAG…RDTVTTAAAS (123 aa)) form a regulatory domain region.

The protein belongs to the alpha-IPM synthase/homocitrate synthase family. LeuA type 1 subfamily. Homodimer. It depends on Mn(2+) as a cofactor.

Its subcellular location is the cytoplasm. It carries out the reaction 3-methyl-2-oxobutanoate + acetyl-CoA + H2O = (2S)-2-isopropylmalate + CoA + H(+). It functions in the pathway amino-acid biosynthesis; L-leucine biosynthesis; L-leucine from 3-methyl-2-oxobutanoate: step 1/4. Its function is as follows. Catalyzes the condensation of the acetyl group of acetyl-CoA with 3-methyl-2-oxobutanoate (2-ketoisovalerate) to form 3-carboxy-3-hydroxy-4-methylpentanoate (2-isopropylmalate). The polypeptide is 2-isopropylmalate synthase (Bradyrhizobium diazoefficiens (strain JCM 10833 / BCRC 13528 / IAM 13628 / NBRC 14792 / USDA 110)).